The primary structure comprises 963 residues: Kinesin-1 heavy chain (963 aa).

A2 carries the post-translational modification N-acetylalanine. Residues 8–325 (NIKVMCRFRP…LLFGQRAKTI (318 aa)) enclose the Kinesin motor domain. 85-92 (GQTSSGKT) contributes to the ATP binding site. Residue K213 forms a Glycyl lysine isopeptide (Lys-Gly) (interchain with G-Cter in SUMO2) linkage. The stretch at 330-913 (CVNVELTAEQ…EAVRSKNMAR (584 aa)) forms a coiled coil. Residues 908 to 963 (SKNMARRGHSAQIAKPIRPGQHPAASPTHPGAVRGGGSFVQNNQPVGLRGGGGKQA) are disordered. The segment at 915–963 (GHSAQIAKPIRPGQHPAASPTHPGAVRGGGSFVQNNQPVGLRGGGGKQA) is globular. Phosphoserine occurs at positions 933 and 945. R956 is modified (omega-N-methylarginine).

Belongs to the TRAFAC class myosin-kinesin ATPase superfamily. Kinesin family. Kinesin subfamily. As to quaternary structure, oligomer composed of two heavy chains and two light chains. Interacts with GRIP1 and PPP1R42. Interacts with SYBU. Interacts with JAKMIP1. Interacts with PLEKHM2. Interacts with ECPAS. Interacts with ZFYVE27. Found in a complex with OGT, RHOT1, RHOT2 and TRAK1. Interacts with APP (via cytoplasmic domain). Expressed in the brain (at protein level). Expressed in the brain, liver, kidney, spleen, heart, lung and sciatic nerve.

The protein resides in the cytoplasm. It is found in the cytoskeleton. The protein localises to the cytolytic granule membrane. It localises to the lysosome membrane. Microtubule-dependent motor required for normal distribution of mitochondria and lysosomes. Can induce formation of neurite-like membrane protrusions in non-neuronal cells in a ZFYVE27-dependent manner. Regulates centrosome and nuclear positioning during mitotic entry. During the G2 phase of the cell cycle in a BICD2-dependent manner, antagonizes dynein function and drives the separation of nuclei and centrosomes. Required for anterograde axonal transportation of MAPK8IP3/JIP3 which is essential for MAPK8IP3/JIP3 function in axon elongation. Through binding with PLEKHM2 and ARL8B, directs lysosome movement toward microtubule plus ends. Involved in NK cell-mediated cytotoxicity. Drives the polarization of cytolytic granules and microtubule-organizing centers (MTOCs) toward the immune synapse between effector NK lymphocytes and target cells. In Rattus norvegicus (Rat), this protein is Kinesin-1 heavy chain.